The following is a 457-amino-acid chain: tRNA-2-methylthio-N(6)-dimethylallyladenosine synthase (457 aa).

Positions 3-120 constitute an MTTase N-terminal domain; that stretch reads KKVYVKTFGC…LPQMIDARRE (118 aa). [4Fe-4S] cluster is bound by residues Cys12, Cys49, Cys83, Cys157, Cys161, and Cys164. The Radical SAM core domain occupies 143-377; the sequence is RVEGPSAFVS…QATIEENVAR (235 aa). In terms of domain architecture, TRAM spans 380 to 447; it reads QSMLGKVERI…PHSLRGELVL (68 aa).

It belongs to the methylthiotransferase family. MiaB subfamily. In terms of assembly, monomer. It depends on [4Fe-4S] cluster as a cofactor.

Its subcellular location is the cytoplasm. The catalysed reaction is N(6)-dimethylallyladenosine(37) in tRNA + (sulfur carrier)-SH + AH2 + 2 S-adenosyl-L-methionine = 2-methylsulfanyl-N(6)-dimethylallyladenosine(37) in tRNA + (sulfur carrier)-H + 5'-deoxyadenosine + L-methionine + A + S-adenosyl-L-homocysteine + 2 H(+). In terms of biological role, catalyzes the methylthiolation of N6-(dimethylallyl)adenosine (i(6)A), leading to the formation of 2-methylthio-N6-(dimethylallyl)adenosine (ms(2)i(6)A) at position 37 in tRNAs that read codons beginning with uridine. In Burkholderia thailandensis (strain ATCC 700388 / DSM 13276 / CCUG 48851 / CIP 106301 / E264), this protein is tRNA-2-methylthio-N(6)-dimethylallyladenosine synthase.